Reading from the N-terminus, the 421-residue chain is UDP-N-acetylglucosamine 1-carboxyvinyltransferase (421 aa).

22 to 23 provides a ligand contact to phosphoenolpyruvate; the sequence is KN. A UDP-N-acetyl-alpha-D-glucosamine-binding site is contributed by arginine 93. Cysteine 117 (proton donor) is an active-site residue. Cysteine 117 is modified (2-(S-cysteinyl)pyruvic acid O-phosphothioketal). UDP-N-acetyl-alpha-D-glucosamine-binding positions include 122–126, aspartate 308, and valine 330; that span reads RPVDL.

The protein belongs to the EPSP synthase family. MurA subfamily.

It is found in the cytoplasm. The catalysed reaction is phosphoenolpyruvate + UDP-N-acetyl-alpha-D-glucosamine = UDP-N-acetyl-3-O-(1-carboxyvinyl)-alpha-D-glucosamine + phosphate. It participates in cell wall biogenesis; peptidoglycan biosynthesis. Cell wall formation. Adds enolpyruvyl to UDP-N-acetylglucosamine. This is UDP-N-acetylglucosamine 1-carboxyvinyltransferase from Pseudomonas aeruginosa (strain LESB58).